We begin with the raw amino-acid sequence, 459 residues long: Argininosuccinate lyase (459 aa).

It belongs to the lyase 1 family. Argininosuccinate lyase subfamily.

It is found in the cytoplasm. It catalyses the reaction 2-(N(omega)-L-arginino)succinate = fumarate + L-arginine. It participates in amino-acid biosynthesis; L-arginine biosynthesis; L-arginine from L-ornithine and carbamoyl phosphate: step 3/3. The sequence is that of Argininosuccinate lyase from Staphylococcus aureus (strain MRSA252).